A 138-amino-acid chain; its full sequence is Large ribosomal subunit protein uL16 (138 aa).

Positions 1-15 (MLSPKKVKYRKKQRG) are enriched in basic residues. The interval 1–21 (MLSPKKVKYRKKQRGRLSGEA) is disordered.

This sequence belongs to the universal ribosomal protein uL16 family. As to quaternary structure, part of the 50S ribosomal subunit.

In terms of biological role, binds 23S rRNA and is also seen to make contacts with the A and possibly P site tRNAs. The chain is Large ribosomal subunit protein uL16 from Borrelia garinii subsp. bavariensis (strain ATCC BAA-2496 / DSM 23469 / PBi) (Borreliella bavariensis).